Reading from the N-terminus, the 232-residue chain is Ribonuclease P protein component 3 (232 aa).

The protein belongs to the eukaryotic/archaeal RNase P protein component 3 family. Consists of a catalytic RNA component and at least 4-5 protein subunits.

It localises to the cytoplasm. The enzyme catalyses Endonucleolytic cleavage of RNA, removing 5'-extranucleotides from tRNA precursor.. In terms of biological role, part of ribonuclease P, a protein complex that generates mature tRNA molecules by cleaving their 5'-ends. In Methanococcus maripaludis (strain C7 / ATCC BAA-1331), this protein is Ribonuclease P protein component 3.